The primary structure comprises 297 residues: Undecaprenyl-diphosphatase (297 aa).

Helical transmembrane passes span 58-78 (PGVA…LSYF), 103-123 (AQMG…GLLI), 138-158 (LAAI…AEQL), 168-188 (LRLA…IPGV), 208-228 (AARF…LVEL), 243-263 (VLAI…AWLL), and 274-294 (FVVY…TGTL).

It belongs to the UppP family.

Its subcellular location is the cell inner membrane. It carries out the reaction di-trans,octa-cis-undecaprenyl diphosphate + H2O = di-trans,octa-cis-undecaprenyl phosphate + phosphate + H(+). In terms of biological role, catalyzes the dephosphorylation of undecaprenyl diphosphate (UPP). Confers resistance to bacitracin. This is Undecaprenyl-diphosphatase from Synechococcus sp. (strain ATCC 27144 / PCC 6301 / SAUG 1402/1) (Anacystis nidulans).